A 48-amino-acid polypeptide reads, in one-letter code: Delta-stichotoxin-Hmg4b (48 aa).

Cystine bridges form between Cys-3–Cys-43, Cys-5–Cys-33, and Cys-26–Cys-44.

This sequence belongs to the sea anemone sodium channel inhibitory toxin family. Type II subfamily.

The protein localises to the secreted. It localises to the nematocyst. Its function is as follows. Binds specifically to voltage-gated sodium channels (Nav), thereby delaying their inactivation during signal transduction. Its toxicity is greater than that of RpII (AC P01534). This Heteractis magnifica (Magnificent sea anemone) protein is Delta-stichotoxin-Hmg4b.